Reading from the N-terminus, the 69-residue chain is Conotoxin Gla-TxXI (69 aa).

Positions 1–25 (MVRVTSVGCFLLVIVSLNLVVLTNA) are cleaved as a signal peptide. 4 disulfide bridges follow: Cys26–Cys40, Cys33–Cys45, Cys39–Cys49, and Cys44–Cys53. Glu29 carries the post-translational modification 4-carboxyglutamate. Pro56 carries the proline amide modification. Positions 60–69 (AKLLEFFRQR) are excised as a propeptide.

Contains 4 disulfide bonds. As to expression, expressed by the venom duct.

It is found in the secreted. This chain is Conotoxin Gla-TxXI, found in Conus textile (Cloth-of-gold cone).